Consider the following 159-residue polypeptide: 2-C-methyl-D-erythritol 2,4-cyclodiphosphate synthase (159 aa).

Residues aspartate 8 and histidine 10 each coordinate a divalent metal cation. Residues 8 to 10 and 34 to 35 contribute to the 4-CDP-2-C-methyl-D-erythritol 2-phosphate site; these read DVH and HS. Histidine 42 contributes to the a divalent metal cation binding site. Residues 56-58, 61-65, 100-106, 132-135, phenylalanine 139, and arginine 142 each bind 4-CDP-2-C-methyl-D-erythritol 2-phosphate; these read DIG, FPDTD, AQAPKML, and TTTE.

This sequence belongs to the IspF family. In terms of assembly, homotrimer. A divalent metal cation serves as cofactor.

It carries out the reaction 4-CDP-2-C-methyl-D-erythritol 2-phosphate = 2-C-methyl-D-erythritol 2,4-cyclic diphosphate + CMP. The protein operates within isoprenoid biosynthesis; isopentenyl diphosphate biosynthesis via DXP pathway; isopentenyl diphosphate from 1-deoxy-D-xylulose 5-phosphate: step 4/6. In terms of biological role, involved in the biosynthesis of isopentenyl diphosphate (IPP) and dimethylallyl diphosphate (DMAPP), two major building blocks of isoprenoid compounds. Catalyzes the conversion of 4-diphosphocytidyl-2-C-methyl-D-erythritol 2-phosphate (CDP-ME2P) to 2-C-methyl-D-erythritol 2,4-cyclodiphosphate (ME-CPP) with a corresponding release of cytidine 5-monophosphate (CMP). This Salmonella arizonae (strain ATCC BAA-731 / CDC346-86 / RSK2980) protein is 2-C-methyl-D-erythritol 2,4-cyclodiphosphate synthase.